Here is a 199-residue protein sequence, read N- to C-terminus: Acireductone dioxygenase 1 (199 aa).

Fe(2+) contacts are provided by histidine 99, histidine 101, glutamate 105, and histidine 144. Residues histidine 99, histidine 101, glutamate 105, and histidine 144 each contribute to the Ni(2+) site.

The protein belongs to the acireductone dioxygenase (ARD) family. The cofactor is Fe(2+). It depends on Ni(2+) as a cofactor.

It is found in the cytoplasm. The protein localises to the nucleus. It catalyses the reaction 1,2-dihydroxy-5-(methylsulfanyl)pent-1-en-3-one + O2 = 4-methylsulfanyl-2-oxobutanoate + formate + 2 H(+). The catalysed reaction is 1,2-dihydroxy-5-(methylsulfanyl)pent-1-en-3-one + O2 = 3-(methylsulfanyl)propanoate + CO + formate + 2 H(+). The protein operates within amino-acid biosynthesis; L-methionine biosynthesis via salvage pathway; L-methionine from S-methyl-5-thio-alpha-D-ribose 1-phosphate: step 5/6. Functionally, catalyzes 2 different reactions between oxygen and the acireductone 1,2-dihydroxy-3-keto-5-methylthiopentene (DHK-MTPene) depending upon the metal bound in the active site. Fe-containing acireductone dioxygenase (Fe-ARD) produces formate and 2-keto-4-methylthiobutyrate (KMTB), the alpha-ketoacid precursor of methionine in the methionine recycle pathway. Ni-containing acireductone dioxygenase (Ni-ARD) produces methylthiopropionate, carbon monoxide and formate, and does not lie on the methionine recycle pathway. The chain is Acireductone dioxygenase 1 (ARD1) from Oryza sativa subsp. indica (Rice).